The chain runs to 663 residues: UvrABC system protein B (663 aa).

The region spanning 30-417 (DGIKAGKRHQ…TDKMVEQIIR (388 aa)) is the Helicase ATP-binding domain. 43-50 (GATGTGKT) lines the ATP pocket. Positions 96–119 (YYDYYQPEAYVPSTDTFIEKDASI) match the Beta-hairpin motif. Residues 434-600 (QIDDLLSEIQ…TINKKIHDLI (167 aa)) enclose the Helicase C-terminal domain. In terms of domain architecture, UVR spans 627 to 662 (QKTIDNIEKEMKQAAKDLDFEKATELRDMLFELKAE).

Belongs to the UvrB family. As to quaternary structure, forms a heterotetramer with UvrA during the search for lesions. Interacts with UvrC in an incision complex.

Its subcellular location is the cytoplasm. In terms of biological role, the UvrABC repair system catalyzes the recognition and processing of DNA lesions. A damage recognition complex composed of 2 UvrA and 2 UvrB subunits scans DNA for abnormalities. Upon binding of the UvrA(2)B(2) complex to a putative damaged site, the DNA wraps around one UvrB monomer. DNA wrap is dependent on ATP binding by UvrB and probably causes local melting of the DNA helix, facilitating insertion of UvrB beta-hairpin between the DNA strands. Then UvrB probes one DNA strand for the presence of a lesion. If a lesion is found the UvrA subunits dissociate and the UvrB-DNA preincision complex is formed. This complex is subsequently bound by UvrC and the second UvrB is released. If no lesion is found, the DNA wraps around the other UvrB subunit that will check the other stand for damage. The protein is UvrABC system protein B of Staphylococcus aureus (strain Mu50 / ATCC 700699).